Consider the following 303-residue polypeptide: Polyisoprenyl-teichoic acid--peptidoglycan teichoic acid transferase TagU (303 aa).

The Cytoplasmic segment spans residues 1 to 4 (MKKK). The chain crosses the membrane as a helical; Signal-anchor for type II membrane protein span at residues 5-25 (ILFWVLGILGVLIIGGGIYAY). The Extracellular segment spans residues 26 to 303 (NVYSSVSNTL…KLRTHLEVTK (278 aa)).

It belongs to the LytR/CpsA/Psr (LCP) family.

The protein localises to the cell membrane. It participates in cell wall biogenesis. In terms of biological role, may catalyze the final step in cell wall teichoic acid biosynthesis, the transfer of the anionic cell wall polymers (APs) from their lipid-linked precursor to the cell wall peptidoglycan (PG). This Bacillus cereus (strain ZK / E33L) protein is Polyisoprenyl-teichoic acid--peptidoglycan teichoic acid transferase TagU.